The following is a 207-amino-acid chain: Acyl-homoserine-lactone synthase (207 aa).

This sequence belongs to the autoinducer synthase family.

It carries out the reaction a fatty acyl-[ACP] + S-adenosyl-L-methionine = an N-acyl-L-homoserine lactone + S-methyl-5'-thioadenosine + holo-[ACP] + H(+). In terms of biological role, required for the synthesis of N-butanoyl-L-homoserine lactone (BHL), an autoinducer molecule which binds to AsaR. The sequence is that of Acyl-homoserine-lactone synthase (asaI) from Aeromonas salmonicida.